Reading from the N-terminus, the 903-residue chain is DNA-directed DNA polymerase (903 aa).

The 3'-5'exonuclease stretch occupies residues Y103–F340. Mg(2+) is bound by residues D114, E116, and D222. A beta hairpin region spans residues T248–T264. D327, D411, and L412 together coordinate Mg(2+). Residues I380–F903 are polymerase. Substrate contacts are provided by residues S414–Y416, R482, and K560. Residue D623 participates in Mg(2+) binding. A binding of DNA in B-conformation region spans residues K705 to Y708. The tract at residues L897–F903 is interaction with the polymerase clamp.

The protein belongs to the DNA polymerase type-B family. As to quaternary structure, part of the replicase complex that includes the DNA polymerase, the polymerase clamp, the clamp loader complex, the single-stranded DNA binding protein, and the primase/helicase. Interacts with the polymerase clamp; this interaction constitutes the polymerase holoenzyme. Mg(2+) is required as a cofactor.

The catalysed reaction is DNA(n) + a 2'-deoxyribonucleoside 5'-triphosphate = DNA(n+1) + diphosphate. Its function is as follows. Replicates the viral genomic DNA. This polymerase possesses two enzymatic activities: DNA synthesis (polymerase) and an exonucleolytic activity that degrades single-stranded DNA in the 3'- to 5'-direction for proofreading purpose. This is DNA-directed DNA polymerase (43) from Escherichia coli (Bacteriophage RB69).